The chain runs to 220 residues: Uracil-DNA glycosylase 2 (220 aa).

Asp-65 (proton acceptor) is an active-site residue.

The protein belongs to the uracil-DNA glycosylase (UDG) superfamily. UNG family.

The protein resides in the cytoplasm. It carries out the reaction Hydrolyzes single-stranded DNA or mismatched double-stranded DNA and polynucleotides, releasing free uracil.. In terms of biological role, excises uracil residues from the DNA which can arise as a result of misincorporation of dUMP residues by DNA polymerase or due to deamination of cytosine. The polypeptide is Uracil-DNA glycosylase 2 (Bacteroides fragilis (strain ATCC 25285 / DSM 2151 / CCUG 4856 / JCM 11019 / LMG 10263 / NCTC 9343 / Onslow / VPI 2553 / EN-2)).